The chain runs to 335 residues: Zinc-type alcohol dehydrogenase-like protein SAV2186 (335 aa).

It belongs to the zinc-containing alcohol dehydrogenase family. Quinone oxidoreductase subfamily.

The sequence is that of Zinc-type alcohol dehydrogenase-like protein SAV2186 from Staphylococcus aureus (strain Mu50 / ATCC 700699).